Reading from the N-terminus, the 464-residue chain is Phosphoglucosamine mutase (464 aa).

Ser112 functions as the Phosphoserine intermediate in the catalytic mechanism. The Mg(2+) site is built by Ser112, Asp252, Asp254, and Asp256. Ser112 carries the phosphoserine modification.

It belongs to the phosphohexose mutase family. Requires Mg(2+) as cofactor. Post-translationally, activated by phosphorylation.

It carries out the reaction alpha-D-glucosamine 1-phosphate = D-glucosamine 6-phosphate. Catalyzes the conversion of glucosamine-6-phosphate to glucosamine-1-phosphate. In Synechococcus sp. (strain CC9605), this protein is Phosphoglucosamine mutase.